We begin with the raw amino-acid sequence, 263 residues long: Type II restriction enzyme TthHB8I (263 aa).

It catalyses the reaction Endonucleolytic cleavage of DNA to give specific double-stranded fragments with terminal 5'-phosphates.. A P subtype restriction enzyme that recognizes the double-stranded sequence 5'-TCGA-3' and cleaves after T-1. This Thermus thermophilus (strain ATCC 27634 / DSM 579 / HB8) protein is Type II restriction enzyme TthHB8I (tthHB8IR).